The following is a 75-amino-acid chain: Cytochrome c oxidase subunit 6C (75 aa).

Residues 1-13 (MAPEVLPKPQMRG) are Mitochondrial matrix-facing. A helical membrane pass occupies residues 14 to 54 (LLARRLRFHMVTGFVLSLGVAALYKVGVADKRKKAYADFYR). Residues 55–75 (NYDAMKDFEEMRKAGIFQSVK) are Mitochondrial intermembrane-facing.

Belongs to the cytochrome c oxidase subunit 6c family. Component of the cytochrome c oxidase (complex IV, CIV), a multisubunit enzyme composed of 14 subunits. The complex is composed of a catalytic core of 3 subunits MT-CO1, MT-CO2 and MT-CO3, encoded in the mitochondrial DNA, and 11 supernumerary subunits COX4I, COX5A, COX5B, COX6A, COX6B, COX6C, COX7A, COX7B, COX7C, COX8 and NDUFA4, which are encoded in the nuclear genome. The complex exists as a monomer or a dimer and forms supercomplexes (SCs) in the inner mitochondrial membrane with NADH-ubiquinone oxidoreductase (complex I, CI) and ubiquinol-cytochrome c oxidoreductase (cytochrome b-c1 complex, complex III, CIII), resulting in different assemblies (supercomplex SCI(1)III(2)IV(1) and megacomplex MCI(2)III(2)IV(2)).

The protein resides in the mitochondrion inner membrane. It functions in the pathway energy metabolism; oxidative phosphorylation. In terms of biological role, component of the cytochrome c oxidase, the last enzyme in the mitochondrial electron transport chain which drives oxidative phosphorylation. The respiratory chain contains 3 multisubunit complexes succinate dehydrogenase (complex II, CII), ubiquinol-cytochrome c oxidoreductase (cytochrome b-c1 complex, complex III, CIII) and cytochrome c oxidase (complex IV, CIV), that cooperate to transfer electrons derived from NADH and succinate to molecular oxygen, creating an electrochemical gradient over the inner membrane that drives transmembrane transport and the ATP synthase. Cytochrome c oxidase is the component of the respiratory chain that catalyzes the reduction of oxygen to water. Electrons originating from reduced cytochrome c in the intermembrane space (IMS) are transferred via the dinuclear copper A center (CU(A)) of subunit 2 and heme A of subunit 1 to the active site in subunit 1, a binuclear center (BNC) formed by heme A3 and copper B (CU(B)). The BNC reduces molecular oxygen to 2 water molecules using 4 electrons from cytochrome c in the IMS and 4 protons from the mitochondrial matrix. This Macaca silenus (Lion-tailed macaque) protein is Cytochrome c oxidase subunit 6C (COX6C).